A 172-amino-acid polypeptide reads, in one-letter code: Keratin-associated protein 13-1 (172 aa).

A run of 5 repeats spans residues 46–55 (CQLGSSLYRG), 56–65 (CQQTCWEPTS), 66–75 (CQTSYVESSP), 76–85 (CQTSCYRPRT), and 92–101 (CQTTYSGSLG). The segment at 46–101 (CQLGSSLYRGCQQTCWEPTSCQTSYVESSPCQTSCYRPRTSLLCSPCQTTYSGSLG) is 5 X 10 AA approximate repeats.

Belongs to the PMG family. Interacts with hair keratins. As to expression, weak expression seen in the late matrix and entire cortex area of the hair follicle.

Its function is as follows. In the hair cortex, hair keratin intermediate filaments are embedded in an interfilamentous matrix, consisting of hair keratin-associated proteins (KRTAP), which are essential for the formation of a rigid and resistant hair shaft through their extensive disulfide bond cross-linking with abundant cysteine residues of hair keratins. The matrix proteins include the high-sulfur and high-glycine-tyrosine keratins. The polypeptide is Keratin-associated protein 13-1 (KRTAP13-1) (Homo sapiens (Human)).